We begin with the raw amino-acid sequence, 237 residues long: Uridylate kinase (237 aa).

Position 12 to 15 (12 to 15) interacts with ATP; it reads KLSG. Positions 20–25 are involved in allosteric activation by GTP; the sequence is GENGFG. Gly54 provides a ligand contact to UMP. Residues Gly55 and Arg59 each coordinate ATP. Residues Asp72 and 133 to 140 each bind UMP; that span reads TGNPYFST. Tyr166 and Asp169 together coordinate ATP.

This sequence belongs to the UMP kinase family. As to quaternary structure, homohexamer.

Its subcellular location is the cytoplasm. The catalysed reaction is UMP + ATP = UDP + ADP. Its pathway is pyrimidine metabolism; CTP biosynthesis via de novo pathway; UDP from UMP (UMPK route): step 1/1. With respect to regulation, allosterically activated by GTP. Inhibited by UTP. Functionally, catalyzes the reversible phosphorylation of UMP to UDP. The chain is Uridylate kinase from Clostridium perfringens (strain ATCC 13124 / DSM 756 / JCM 1290 / NCIMB 6125 / NCTC 8237 / Type A).